Consider the following 241-residue polypeptide: Uridylate kinase (241 aa).

Residue 12–15 participates in ATP binding; sequence KISG. The interval 20–25 is involved in allosteric activation by GTP; that stretch reads GDKGNG. A UMP-binding site is contributed by Gly-54. Gly-55 and Arg-59 together coordinate ATP. UMP is bound by residues Asp-74 and 135–142; that span reads TGNPYFST. ATP contacts are provided by Asn-163, Tyr-169, and Asp-172.

This sequence belongs to the UMP kinase family. Homohexamer.

The protein localises to the cytoplasm. The enzyme catalyses UMP + ATP = UDP + ADP. The protein operates within pyrimidine metabolism; CTP biosynthesis via de novo pathway; UDP from UMP (UMPK route): step 1/1. With respect to regulation, allosterically activated by GTP. Inhibited by UTP. In terms of biological role, catalyzes the reversible phosphorylation of UMP to UDP. The polypeptide is Uridylate kinase (Lactobacillus helveticus (strain DPC 4571)).